A 474-amino-acid polypeptide reads, in one-letter code: tRNA-2-methylthio-N(6)-dimethylallyladenosine synthase (474 aa).

The 118-residue stretch at 3–120 folds into the MTTase N-terminal domain; sequence KKLHIKTWGC…LPEMIEQVRR (118 aa). Residues Cys12, Cys49, Cys83, Cys157, Cys161, and Cys164 each contribute to the [4Fe-4S] cluster site. The Radical SAM core domain maps to 143–375; it reads RAEGPTAFVS…QDRITQQAMR (233 aa). The TRAM domain maps to 378–441; it reads RHMMGTVQRI…TNSLRGKFIR (64 aa).

This sequence belongs to the methylthiotransferase family. MiaB subfamily. As to quaternary structure, monomer. It depends on [4Fe-4S] cluster as a cofactor.

The protein localises to the cytoplasm. The enzyme catalyses N(6)-dimethylallyladenosine(37) in tRNA + (sulfur carrier)-SH + AH2 + 2 S-adenosyl-L-methionine = 2-methylsulfanyl-N(6)-dimethylallyladenosine(37) in tRNA + (sulfur carrier)-H + 5'-deoxyadenosine + L-methionine + A + S-adenosyl-L-homocysteine + 2 H(+). Functionally, catalyzes the methylthiolation of N6-(dimethylallyl)adenosine (i(6)A), leading to the formation of 2-methylthio-N6-(dimethylallyl)adenosine (ms(2)i(6)A) at position 37 in tRNAs that read codons beginning with uridine. In Shewanella oneidensis (strain ATCC 700550 / JCM 31522 / CIP 106686 / LMG 19005 / NCIMB 14063 / MR-1), this protein is tRNA-2-methylthio-N(6)-dimethylallyladenosine synthase.